Here is a 113-residue protein sequence, read N- to C-terminus: MAKIQFSRGLDEVVIPEVRLTRSRTGDSGTATFIFTNPKILDQGSTEDITGMYLSDEEGEIITREVKAKFVNGKPEALEALYVMKSAQEWDRFMRFMERYAEENDLGLSKAEK.

The protein belongs to the Psb28 family. As to quaternary structure, part of the photosystem II complex.

It localises to the cellular thylakoid membrane. In Nostoc punctiforme (strain ATCC 29133 / PCC 73102), this protein is Photosystem II reaction center Psb28 protein.